The following is a 212-amino-acid chain: ATP-dependent dethiobiotin synthetase BioD (212 aa).

ATP is bound at residue aspartate 12–phenylalanine 17. Residue threonine 16 participates in Mg(2+) binding. Lysine 33 is a catalytic residue. Position 37 (serine 37) interacts with substrate. ATP is bound by residues aspartate 50, glutamate 110–glycine 113, and asparagine 170–cysteine 171. The Mg(2+) site is built by aspartate 50 and glutamate 110.

It belongs to the dethiobiotin synthetase family. As to quaternary structure, homodimer. Requires Mg(2+) as cofactor.

It is found in the cytoplasm. It carries out the reaction (7R,8S)-7,8-diammoniononanoate + CO2 + ATP = (4R,5S)-dethiobiotin + ADP + phosphate + 3 H(+). The protein operates within cofactor biosynthesis; biotin biosynthesis; biotin from 7,8-diaminononanoate: step 1/2. Catalyzes a mechanistically unusual reaction, the ATP-dependent insertion of CO2 between the N7 and N8 nitrogen atoms of 7,8-diaminopelargonic acid (DAPA, also called 7,8-diammoniononanoate) to form a ureido ring. This Legionella pneumophila subsp. pneumophila (strain Philadelphia 1 / ATCC 33152 / DSM 7513) protein is ATP-dependent dethiobiotin synthetase BioD.